Consider the following 557-residue polypeptide: Kelch repeat and BTB domain-containing protein 2 (557 aa).

Positions 26-95 constitute a BTB domain; sequence CDVIITIRDG…LYNRHISSMN (70 aa). A BACK domain is found at 143–223; the sequence is IVKYIKRMLM…CIDIQNLDKK (81 aa). 3 Kelch repeats span residues 305 to 352, 353 to 399, and 415 to 464; these read EIII…VIDD, TIYA…VLDQ, and SVHA…SHED.

Interacts (via BTB domain) with host CUL3.

The protein resides in the host cytoplasm. Probable substrate-specific adapter of CUL3-containing E3 ubiquitin-protein ligases which mediate the ubiquitination and subsequent proteasomal degradation of host target proteins. In Cowpox virus (strain Brighton Red) (CPV), this protein is Kelch repeat and BTB domain-containing protein 2 (KBTB2).